Reading from the N-terminus, the 122-residue chain is Large ribosomal subunit protein uL14 (122 aa).

It belongs to the universal ribosomal protein uL14 family. In terms of assembly, part of the 50S ribosomal subunit. Forms a cluster with proteins L3 and L19. In the 70S ribosome, L14 and L19 interact and together make contacts with the 16S rRNA in bridges B5 and B8.

Functionally, binds to 23S rRNA. Forms part of two intersubunit bridges in the 70S ribosome. The polypeptide is Large ribosomal subunit protein uL14 (Neisseria gonorrhoeae (strain ATCC 700825 / FA 1090)).